The sequence spans 64 residues: Protein sigN173 (64 aa).

This chain is Protein sigN173, found in Dictyostelium discoideum (Social amoeba).